The chain runs to 720 residues: Polyribonucleotide nucleotidyltransferase (720 aa).

Aspartate 485 and aspartate 491 together coordinate Mg(2+). Residues 552 to 615 (PRIHTIKINP…EAIRRIQALT (64 aa)) form the KH domain. The 69-residue stretch at 621 to 689 (GRIYEGKVTR…RQGRIRLSIK (69 aa)) folds into the S1 motif domain. Residues 697-720 (PAAESVAESAPAQEAVVEQVPMTE) form a disordered region. Positions 698–720 (AAESVAESAPAQEAVVEQVPMTE) are enriched in low complexity.

The protein belongs to the polyribonucleotide nucleotidyltransferase family. Component of the RNA degradosome, which is a multiprotein complex involved in RNA processing and mRNA degradation. Mg(2+) is required as a cofactor.

It is found in the cytoplasm. It catalyses the reaction RNA(n+1) + phosphate = RNA(n) + a ribonucleoside 5'-diphosphate. Functionally, involved in mRNA degradation. Catalyzes the phosphorolysis of single-stranded polyribonucleotides processively in the 3'- to 5'-direction. In Tolumonas auensis (strain DSM 9187 / NBRC 110442 / TA 4), this protein is Polyribonucleotide nucleotidyltransferase.